The chain runs to 266 residues: Glucosamine-6-phosphate deaminase (266 aa).

The active-site Proton acceptor; for enolization step is Asp72. Asp141 functions as the For ring-opening step in the catalytic mechanism. The active-site Proton acceptor; for ring-opening step is His143. Residue Glu148 is the For ring-opening step of the active site.

This sequence belongs to the glucosamine/galactosamine-6-phosphate isomerase family. NagB subfamily. As to quaternary structure, homohexamer.

It carries out the reaction alpha-D-glucosamine 6-phosphate + H2O = beta-D-fructose 6-phosphate + NH4(+). Its pathway is amino-sugar metabolism; N-acetylneuraminate degradation; D-fructose 6-phosphate from N-acetylneuraminate: step 5/5. Allosterically activated by N-acetylglucosamine 6-phosphate (GlcNAc6P). Its function is as follows. Catalyzes the reversible isomerization-deamination of glucosamine 6-phosphate (GlcN6P) to form fructose 6-phosphate (Fru6P) and ammonium ion. The sequence is that of Glucosamine-6-phosphate deaminase from Yersinia pseudotuberculosis serotype O:1b (strain IP 31758).